A 259-amino-acid chain; its full sequence is Glucosamine-6-phosphate deaminase (259 aa).

Residue aspartate 66 is the Proton acceptor; for enolization step of the active site. Aspartate 135 serves as the catalytic For ring-opening step. Histidine 137 (proton acceptor; for ring-opening step) is an active-site residue. Glutamate 142 serves as the catalytic For ring-opening step.

The protein belongs to the glucosamine/galactosamine-6-phosphate isomerase family. NagB subfamily.

The enzyme catalyses alpha-D-glucosamine 6-phosphate + H2O = beta-D-fructose 6-phosphate + NH4(+). It functions in the pathway amino-sugar metabolism; N-acetylneuraminate degradation; D-fructose 6-phosphate from N-acetylneuraminate: step 5/5. Functionally, catalyzes the reversible isomerization-deamination of glucosamine 6-phosphate (GlcN6P) to form fructose 6-phosphate (Fru6P) and ammonium ion. In Rhodococcus opacus (strain B4), this protein is Glucosamine-6-phosphate deaminase.